The following is a 424-amino-acid chain: Vasopressin V1b receptor (424 aa).

Residues M1–A22 are disordered. The Extracellular portion of the chain corresponds to M1–K35. Positions P13–A22 are enriched in polar residues. An N-linked (GlcNAc...) asparagine glycan is attached at N21. A helical membrane pass occupies residues V36 to L59. At G60 to L71 the chain is on the cytoplasmic side. Residues F72 to L93 traverse the membrane as a helical segment. Topologically, residues W94–R108 are extracellular. Residues C107 and C186 are joined by a disulfide bond. Residues A109 to L130 form a helical membrane-spanning segment. Topologically, residues D131–Y151 are cytoplasmic. A helical membrane pass occupies residues L152 to S173. Residues L174–T201 are Extracellular-facing. The chain crosses the membrane as a helical span at residues W202–I222. Topologically, residues C223 to T283 are cytoplasmic. A helical transmembrane segment spans residues F284 to W303. Over S304–T321 the chain is Extracellular. Residues I322–F341 form a helical membrane-spanning segment. The Cytoplasmic portion of the chain corresponds to N342 to F424. The segment at S398–G417 is disordered. Positions P401–E411 are enriched in basic and acidic residues.

It belongs to the G-protein coupled receptor 1 family. Vasopressin/oxytocin receptor subfamily.

It is found in the cell membrane. Receptor for arginine vasopressin. The activity of this receptor is mediated by G proteins which activate a phosphatidyl-inositol-calcium second messenger system. Its function is as follows. (Microbial infection) During SARS coronavirus-2/SARS-CoV-2 infection, may recognize and internalize the complex formed by AVP/Arg-vasopressin, SARS-CoV-2 spike protein and secreted ACE2 through DNM2/dynamin 2-dependent endocytosis. The polypeptide is Vasopressin V1b receptor (Homo sapiens (Human)).